The chain runs to 346 residues: Histidinol-phosphate aminotransferase (346 aa).

Lys209 is subject to N6-(pyridoxal phosphate)lysine.

It belongs to the class-II pyridoxal-phosphate-dependent aminotransferase family. Histidinol-phosphate aminotransferase subfamily. As to quaternary structure, homodimer. It depends on pyridoxal 5'-phosphate as a cofactor.

It catalyses the reaction L-histidinol phosphate + 2-oxoglutarate = 3-(imidazol-4-yl)-2-oxopropyl phosphate + L-glutamate. The protein operates within amino-acid biosynthesis; L-histidine biosynthesis; L-histidine from 5-phospho-alpha-D-ribose 1-diphosphate: step 7/9. In Aliivibrio fischeri (strain MJ11) (Vibrio fischeri), this protein is Histidinol-phosphate aminotransferase.